The sequence spans 69 residues: Small ribosomal subunit protein bS21 (69 aa).

The protein belongs to the bacterial ribosomal protein bS21 family.

The sequence is that of Small ribosomal subunit protein bS21 from Hyphomonas neptunium (strain ATCC 15444).